The sequence spans 333 residues: Cytochrome f (333 aa).

An N-terminal signal peptide occupies residues 1 to 44 (MRNASVTARLTRSVRAIVKTLLIAIATVTFYFSCDLALPQSAAA). Heme is bound by residues Y45, C66, C69, and H70. The chain crosses the membrane as a helical span at residues 301–318 (GLIAFVALVMLAQVMLVL).

It belongs to the cytochrome f family. In terms of assembly, the 4 large subunits of the cytochrome b6-f complex are cytochrome b6, subunit IV (17 kDa polypeptide, PetD), cytochrome f and the Rieske protein, while the 4 small subunits are PetG, PetL, PetM and PetN. The complex functions as a dimer. It depends on heme as a cofactor.

The protein resides in the cellular thylakoid membrane. Its function is as follows. Component of the cytochrome b6-f complex, which mediates electron transfer between photosystem II (PSII) and photosystem I (PSI), cyclic electron flow around PSI, and state transitions. This chain is Cytochrome f (petA), found in Desmonostoc sp. (strain PCC 7906) (Nostoc sp. (strain PCC 7906)).